The primary structure comprises 105 residues: POU domain, class 3, transcription factor 3 (105 aa).

The POU-specific domain occupies 1 to 49 (QADVGLALGTLYGNVFSQTTICRFEALQLSFKNMCKLKPLLNKWLEEAD). The homeobox DNA-binding region spans 67-105 (KRKKRTSIEVSVKGALESHFLKCPKPAAQEITTLADSLQ).

Belongs to the POU transcription factor family. Class-3 subfamily.

The protein localises to the nucleus. This is POU domain, class 3, transcription factor 3 (pou3f3) from Xenopus laevis (African clawed frog).